Here is a 208-residue protein sequence, read N- to C-terminus: FMN-dependent NADH:quinone oxidoreductase 1 (208 aa).

This sequence belongs to the azoreductase type 1 family. In terms of assembly, homodimer. It depends on FMN as a cofactor.

The enzyme catalyses 2 a quinone + NADH + H(+) = 2 a 1,4-benzosemiquinone + NAD(+). It carries out the reaction N,N-dimethyl-1,4-phenylenediamine + anthranilate + 2 NAD(+) = 2-(4-dimethylaminophenyl)diazenylbenzoate + 2 NADH + 2 H(+). Functionally, quinone reductase that provides resistance to thiol-specific stress caused by electrophilic quinones. In terms of biological role, also exhibits azoreductase activity. Catalyzes the reductive cleavage of the azo bond in aromatic azo compounds to the corresponding amines. This Bacillus licheniformis (strain ATCC 14580 / DSM 13 / JCM 2505 / CCUG 7422 / NBRC 12200 / NCIMB 9375 / NCTC 10341 / NRRL NRS-1264 / Gibson 46) protein is FMN-dependent NADH:quinone oxidoreductase 1.